Reading from the N-terminus, the 179-residue chain is MTFDHDLKASVRTIPDYPKPGIMFRDITTLLADARAFRRAVDELVNPWAGNKIDKVAGMEARGFIIGGAVAHQLSAGFVPIRKKGKLPHTTVRIAYSLEYGIDEMEMHVDAIQPGERVILVDDLIATGGTAEGAVKLLRQIGANVVAACFIIDLPELGGAAKLRAMDVPVRTLMTFEGH.

This sequence belongs to the purine/pyrimidine phosphoribosyltransferase family. Homodimer.

Its subcellular location is the cytoplasm. It catalyses the reaction AMP + diphosphate = 5-phospho-alpha-D-ribose 1-diphosphate + adenine. The protein operates within purine metabolism; AMP biosynthesis via salvage pathway; AMP from adenine: step 1/1. Catalyzes a salvage reaction resulting in the formation of AMP, that is energically less costly than de novo synthesis. In Bradyrhizobium diazoefficiens (strain JCM 10833 / BCRC 13528 / IAM 13628 / NBRC 14792 / USDA 110), this protein is Adenine phosphoribosyltransferase.